We begin with the raw amino-acid sequence, 479 residues long: Phosphoglycerate kinase, glycosomal (479 aa).

(2R)-3-phosphoglycerate contacts are provided by V23, D24, F25, N26, R39, S61, H62, G64, R65, R132, H168, and R169. The ADP site is built by G214 and A215. G214 contributes to the CDP binding site. 2 residues coordinate AMP: A215 and K216. A215 contacts ATP. Residue A215 coordinates Mg(2+). K216 is a binding site for (2R)-3-phosphoglycerate. D219 lines the CDP pocket. D219 lines the Mg(2+) pocket. Positions 220 and 238 each coordinate ADP. AMP is bound at residue K220. K220 contacts ATP. A CDP-binding site is contributed by G238. AMP-binding residues include A239 and A311. A239 and A311 together coordinate ATP. ADP contacts are provided by A311 and N335. Positions 336 and 341 each coordinate CDP. Positions 341, 342, 374, and 375 each coordinate ADP. E342 serves as a coordination point for AMP. ATP-binding residues include E342, D374, and S375. D374 is a Mg(2+) binding site.

This sequence belongs to the phosphoglycerate kinase family. In terms of assembly, monomer. It depends on Mg(2+) as a cofactor.

The protein resides in the glycosome. The enzyme catalyses (2R)-3-phosphoglycerate + ATP = (2R)-3-phospho-glyceroyl phosphate + ADP. Its pathway is carbohydrate degradation; glycolysis; pyruvate from D-glyceraldehyde 3-phosphate: step 2/5. The polypeptide is Phosphoglycerate kinase, glycosomal (PGKC) (Leishmania major).